Consider the following 71-residue polypeptide: Gas vesicle protein A (71 aa).

The alpha helix 1 stretch occupies residues 12–22 (LAEVIDRILDK). The beta-strand 1 stretch occupies residues 23–32 (GIVIDAWVRV). The segment at 33-36 (SLVG) is beta turn. The tract at residues 37-46 (IELLAIEARI) is beta-strand 2. Residues 47–70 (VIASVETYLKYAEAVGLTQSAAVP) are alpha helix 2.

It belongs to the gas vesicle GvpA family. In terms of assembly, the gas vesicle shell is 2 nm thick and consists of a single layer of this protein. It forms helical ribs nearly perpendicular to the long axis of the vesicle.

The protein resides in the gas vesicle shell. In terms of biological role, gas vesicles (GV) are hollow, gas filled proteinaceous nanostructures found in some microorganisms. During planktonic growth they allow positioning of the organism at a favorable depth for light or nutrient acquisition. GVs are highly permeable to gas. GvpA forms the protein shell. The ratio of GvpA:GvpC is estimated to be 33:1 and more recently 25:1. This Dolichospermum flosaquae (Anabaena flos-aquae) protein is Gas vesicle protein A.